A 264-amino-acid chain; its full sequence is Thymidylate synthase (264 aa).

Position 21 (Arg21) interacts with dUMP. Residue His51 coordinates (6R)-5,10-methylene-5,6,7,8-tetrahydrofolate. Residue 126-127 (RR) participates in dUMP binding. Catalysis depends on Cys146, which acts as the Nucleophile. DUMP is bound by residues 166–169 (RSVD), Asn177, and 207–209 (HLY). (6R)-5,10-methylene-5,6,7,8-tetrahydrofolate is bound at residue Asp169. A (6R)-5,10-methylene-5,6,7,8-tetrahydrofolate-binding site is contributed by Ser263.

Belongs to the thymidylate synthase family. Bacterial-type ThyA subfamily. In terms of assembly, homodimer.

It localises to the cytoplasm. The catalysed reaction is dUMP + (6R)-5,10-methylene-5,6,7,8-tetrahydrofolate = 7,8-dihydrofolate + dTMP. It functions in the pathway pyrimidine metabolism; dTTP biosynthesis. Its function is as follows. Catalyzes the reductive methylation of 2'-deoxyuridine-5'-monophosphate (dUMP) to 2'-deoxythymidine-5'-monophosphate (dTMP) while utilizing 5,10-methylenetetrahydrofolate (mTHF) as the methyl donor and reductant in the reaction, yielding dihydrofolate (DHF) as a by-product. This enzymatic reaction provides an intracellular de novo source of dTMP, an essential precursor for DNA biosynthesis. This Anoxybacillus flavithermus (strain DSM 21510 / WK1) protein is Thymidylate synthase.